The chain runs to 1926 residues: Myosin-15 (1926 aa).

Positions 29–79 (DGKKKCWIPDGENAYIEAEVKGSEDDGTVIVETADGESLSIKEDKIQQMNP) constitute a Myosin N-terminal SH3-like domain. Residues 83–770 (EMIEDMAMLT…FLGQLEAIRD (688 aa)) enclose the Myosin motor domain. An N6,N6,N6-trimethyllysine modification is found at Lys127. 176 to 183 (GESGAGKT) is an ATP binding site. Actin-binding regions lie at residues 647-669 (LNKLMTNLKSTAPHFVRCINPNV) and 749-763 (RFGITKVFFKAGFLG). The region spanning 773–802 (LSKVFTLFQARAQGKLMRIKFQKILEERDA) is the IQ domain. The stretch at 833-1926 (KSSEVGEEVA…REFGKKVQEE (1094 aa)) forms a coiled coil.

Belongs to the TRAFAC class myosin-kinesin ATPase superfamily. Myosin family. In terms of assembly, muscle myosin is a hexameric protein that consists of 2 heavy chain subunits (MHC), 2 alkali light chain subunits (MLC) and 2 regulatory light chain subunits (MLC-2).

The protein resides in the cytoplasm. Its subcellular location is the myofibril. In terms of biological role, muscle contraction. The polypeptide is Myosin-15 (MYH15) (Homo sapiens (Human)).